Reading from the N-terminus, the 456-residue chain is Keratin, type I cuticular Ha8 (456 aa).

A head region spans residues 1 to 104 (MTSSYSSSSC…YGENTLNGHE (104 aa)). Residues 104-415 (EKETMQFLND…NLLESEDCKL (312 aa)) form the IF rod domain. Residues 105 to 139 (KETMQFLNDRLANYLEKVRQLEQENAELEATLLER) form a coil 1A region. A linker 1 region spans residues 140-150 (SKCHESTVCPD). Residues 151–251 (YQSYFHTIEE…HEQEVKILRS (101 aa)) form a coil 1B region. Residues 252 to 267 (QLGEKLRIELDIEPTI) are linker 12. Residues 268–411 (DLNRVLGEMR…ATYRNLLESE (144 aa)) form a coil 2 region. The segment at 412 to 456 (DCKLPCNPCSTSPSCVTAPCAPRPSCGPCTTCGPTCGASTTGSRF) is tail.

It belongs to the intermediate filament family.

The protein is Keratin, type I cuticular Ha8 (KRT38) of Homo sapiens (Human).